Here is a 324-residue protein sequence, read N- to C-terminus: UDP-N-acetylenolpyruvoylglucosamine reductase (324 aa).

An FAD-binding PCMH-type domain is found at 39-220 (RTGGLAELFY…RAAMHEVALH (182 aa)). Arg-185 is a catalytic residue. The active-site Proton donor is the Ser-234. The active site involves Glu-304.

The protein belongs to the MurB family. FAD serves as cofactor.

The protein resides in the cytoplasm. It catalyses the reaction UDP-N-acetyl-alpha-D-muramate + NADP(+) = UDP-N-acetyl-3-O-(1-carboxyvinyl)-alpha-D-glucosamine + NADPH + H(+). The protein operates within cell wall biogenesis; peptidoglycan biosynthesis. Cell wall formation. The polypeptide is UDP-N-acetylenolpyruvoylglucosamine reductase (Bartonella bacilliformis (strain ATCC 35685 / KC583 / Herrer 020/F12,63)).